The primary structure comprises 299 residues: Taste receptor type 2 member 16 (299 aa).

Residues 1–5 (MVPTQ) lie on the Extracellular side of the membrane. Residues 6 to 26 (VTIFSIIMYVLESLVIIVQSC) form a helical membrane-spanning segment. Residues 27 to 47 (TTVAVLFREWMHFQRLSPVET) lie on the Cytoplasmic side of the membrane. The chain crosses the membrane as a helical span at residues 48–68 (ILISLGISHFCLQWTSMLYNF). Over 69 to 82 (GTYSRPVLLFWKVS) the chain is Extracellular. The chain crosses the membrane as a helical span at residues 83–103 (VVWEFMNILTFWLTSWLAVLY). Residues 104–125 (CVKVSSFTHPIFLWLRMKILKL) lie on the Cytoplasmic side of the membrane. A helical transmembrane segment spans residues 126–146 (VLWLILGALIASCLSIIPSVV). Over 147–183 (KYHIQMELVTLDNLPKNNSLILRLQQFEWYFSNPLKM) the chain is Extracellular. Asn-163 carries an N-linked (GlcNAc...) asparagine glycan. A helical membrane pass occupies residues 184 to 204 (IGFGIPFFVFLASIILLTVSL). At 205 to 233 (VQHWVQMKHYSSSNSSLKAQFTVLKSLAT) the chain is on the cytoplasmic side. A helical transmembrane segment spans residues 234 to 254 (FFTFFTSYFLTIVISFIGTVF). The Extracellular segment spans residues 255–258 (DKKS). The helical transmembrane segment at 259 to 279 (WFWVCEAVIYGLVCIHFTSLM) threads the bilayer. Residues 280 to 299 (MSNPALKKALKLQFWSPEPS) lie on the Cytoplasmic side of the membrane.

It belongs to the G-protein coupled receptor T2R family. Interacts with RTP3 and RTP4.

It localises to the cell membrane. Its function is as follows. Gustducin-coupled receptor implicated in the perception of bitter compounds in the oral cavity and the gastrointestinal tract. Signals through PLCB2 and the calcium-regulated cation channel TRPM5. This Mus musculus (Mouse) protein is Taste receptor type 2 member 16 (Tas2r16).